An 843-amino-acid polypeptide reads, in one-letter code: Excretory canal abnormal protein 6 (843 aa).

4 disordered regions span residues 54-135 (QLKD…EKKT), 568-601 (TLES…PAKT), 748-767 (TPLS…MTAE), and 773-843 (TMKP…PKWV). Pro residues-rich tracts occupy residues 66 to 76 (TPPPPPPPPPL) and 83 to 103 (APPP…PPPI). In terms of domain architecture, FH2 spans 127–512 (FLPKKEKKTK…KEEKKETQTT (386 aa)). Composition is skewed to polar residues over residues 776–792 (PSVS…TSSH) and 819–830 (IPQSPTVTSSAR).

Belongs to the formin homology family. In terms of tissue distribution, expressed in the excretory cell and mostly accumulates at the tip of the excretory cell canals.

It localises to the cytoplasm. It is found in the cytoskeleton. Constitutively active protein required for microtubule and F-actin growth, structural maintenance and organization during excretory cell tubulogenesis. The sequence is that of Excretory canal abnormal protein 6 from Caenorhabditis elegans.